We begin with the raw amino-acid sequence, 228 residues long: 7-cyano-7-deazaguanine synthase (228 aa).

An ATP-binding site is contributed by 9 to 19 (LSGGPDSTTVL). Positions 193, 203, 206, and 209 each coordinate Zn(2+).

This sequence belongs to the QueC family. The cofactor is Zn(2+).

The catalysed reaction is 7-carboxy-7-deazaguanine + NH4(+) + ATP = 7-cyano-7-deazaguanine + ADP + phosphate + H2O + H(+). It participates in purine metabolism; 7-cyano-7-deazaguanine biosynthesis. Catalyzes the ATP-dependent conversion of 7-carboxy-7-deazaguanine (CDG) to 7-cyano-7-deazaguanine (preQ(0)). This is 7-cyano-7-deazaguanine synthase from Rickettsia africae (strain ESF-5).